The following is a 523-amino-acid chain: 2-isopropylmalate synthase (523 aa).

The region spanning 5–267 (VIIFDTTLRD…HTAINHQEIW (263 aa)) is the Pyruvate carboxyltransferase domain. Asp-14, His-202, His-204, and Asn-238 together coordinate Mn(2+). Positions 392 to 523 (RLDYFSVQSS…QHNENNKETV (132 aa)) are regulatory domain.

Belongs to the alpha-IPM synthase/homocitrate synthase family. LeuA type 1 subfamily. As to quaternary structure, homodimer. It depends on Mn(2+) as a cofactor.

Its subcellular location is the cytoplasm. The enzyme catalyses 3-methyl-2-oxobutanoate + acetyl-CoA + H2O = (2S)-2-isopropylmalate + CoA + H(+). It functions in the pathway amino-acid biosynthesis; L-leucine biosynthesis; L-leucine from 3-methyl-2-oxobutanoate: step 1/4. In terms of biological role, catalyzes the condensation of the acetyl group of acetyl-CoA with 3-methyl-2-oxobutanoate (2-ketoisovalerate) to form 3-carboxy-3-hydroxy-4-methylpentanoate (2-isopropylmalate). The chain is 2-isopropylmalate synthase from Shigella dysenteriae serotype 1 (strain Sd197).